The sequence spans 300 residues: GTPase Era (300 aa).

The 169-residue stretch at 8–176 folds into the Era-type G domain; that stretch reads RCGYVAIVGR…EAQIAKHLPE (169 aa). The segment at 16 to 23 is G1; the sequence is GRPNVGKS. 16–23 is a binding site for GTP; the sequence is GRPNVGKS. A G2 region spans residues 42–46; sequence QTTRH. The G3 stretch occupies residues 63-66; sequence DTPG. Residues 63–67 and 125–128 each bind GTP; these read DTPGM and NKTD. Residues 125 to 128 form a G4 region; it reads NKTD. The tract at residues 155 to 157 is G5; that stretch reads ISA. Positions 199–283 constitute a KH type-2 domain; it reads VREKIMRQLG…MLNLWVKVKG (85 aa).

This sequence belongs to the TRAFAC class TrmE-Era-EngA-EngB-Septin-like GTPase superfamily. Era GTPase family. Monomer.

Its subcellular location is the cytoplasm. The protein localises to the cell inner membrane. Functionally, an essential GTPase that binds both GDP and GTP, with rapid nucleotide exchange. Plays a role in 16S rRNA processing and 30S ribosomal subunit biogenesis and possibly also in cell cycle regulation and energy metabolism. In Pseudomonas putida (strain ATCC 700007 / DSM 6899 / JCM 31910 / BCRC 17059 / LMG 24140 / F1), this protein is GTPase Era.